Here is a 530-residue protein sequence, read N- to C-terminus: UDP-glucuronosyltransferase 1A8 (530 aa).

An N-terminal signal peptide occupies residues 1 to 25 (MAPSGCPPSLPLCVCLFLASGFAQA). N-linked (GlcNAc...) asparagine glycans are attached at residues Asn71, Asn292, and Asn430. A helical membrane pass occupies residues 488–504 (VIGFLLAIVLTVVFIVY).

This sequence belongs to the UDP-glycosyltransferase family. In terms of assembly, homodimers. Homooligomer. Interacts with UGT1A1, UGT1A3, UGT1A4, UGT1A6, UGT1A7, UGT1A8, UGT1A9 and UGT1A10 to form heterodimers.

Its subcellular location is the endoplasmic reticulum membrane. It catalyses the reaction glucuronate acceptor + UDP-alpha-D-glucuronate = acceptor beta-D-glucuronoside + UDP + H(+). The enzyme catalyses 17beta-estradiol + UDP-alpha-D-glucuronate = 17beta-estradiol 3-O-(beta-D-glucuronate) + UDP + H(+). It carries out the reaction 17alpha-estradiol + UDP-alpha-D-glucuronate = 17alpha-estradiol 3-O-(beta-D-glucuronate) + UDP + H(+). The catalysed reaction is estrone + UDP-alpha-D-glucuronate = estrone 3-O-(beta-D-glucuronate) + UDP + H(+). It catalyses the reaction 16alpha,17alpha-estriol + UDP-alpha-D-glucuronate = 16alpha,17alpha-estriol 3-O-(beta-D-glucuronate) + UDP + H(+). The enzyme catalyses 2-hydroxy-17beta-estradiol + UDP-alpha-D-glucuronate = 2-hydroxy-17beta-estradiol 3-O-(beta-D-glucuronate) + UDP + H(+). It carries out the reaction 2-hydroxy-17beta-estradiol + UDP-alpha-D-glucuronate = 17beta-estradiol 2-O-(beta-D-glucuronate) + UDP + H(+). The catalysed reaction is 2-hydroxyestrone + UDP-alpha-D-glucuronate = 2-hydroxyestrone 3-O-(beta-D-glucuronate) + UDP + H(+). It catalyses the reaction 4-hydroxy-17beta-estradiol + UDP-alpha-D-glucuronate = 4-hydroxy-17beta-estradiol 3-O-(beta-D-glucuronate) + UDP + H(+). The enzyme catalyses 4-hydroxy-17beta-estradiol + UDP-alpha-D-glucuronate = 17beta-estradiol 4-O-(beta-D-glucuronate) + UDP + H(+). It carries out the reaction 4-hydroxyestrone + UDP-alpha-D-glucuronate = 4-hydroxyestrone 3-O-(beta-D-glucuronate) + UDP + H(+). The catalysed reaction is 4-hydroxyestrone + UDP-alpha-D-glucuronate = estrone 4-O-(beta-D-glucuronate) + UDP + H(+). It catalyses the reaction 2-methoxy-17beta-estradiol + UDP-alpha-D-glucuronate = 2-methoxy-17beta-estradiol 3-O-(beta-D-glucuronate) + UDP + H(+). The enzyme catalyses 2-methoxyestrone + UDP-alpha-D-glucuronate = 2-methoxyestrone 3-O-(beta-D-glucuronate) + UDP + H(+). It carries out the reaction 4-methoxy-17beta-estradiol + UDP-alpha-D-glucuronate = 4-methoxy-17beta-estradiol 3-O-(beta-D-glucuronate) + UDP + H(+). The catalysed reaction is 4-methoxyestrone + UDP-alpha-D-glucuronate = 4-methoxyestrone 3-O-(beta-D-glucuronate) + UDP + H(+). It catalyses the reaction 17beta-hydroxy-5alpha-androstan-3-one + UDP-alpha-D-glucuronate = 5alpha-dihydrotestosterone 17-O-(beta-D-glucuronate) + UDP + H(+). The enzyme catalyses 5alpha-dihydrotestosterone 17-O-(beta-D-glucuronate) + UDP-alpha-D-glucuronate = 5alpha-dihydrotestosterone 17-O-[beta-D-glucuronosyl-(1-&gt;2)-glucuronate] + UDP + H(+). It carries out the reaction prunetin + UDP-alpha-D-glucuronate = prunetin-4'-O-beta-D-glucuronide + UDP. The catalysed reaction is prunetin + UDP-alpha-D-glucuronate = prunetin-5-O-beta-D-glucuronide + UDP. It catalyses the reaction (E)-ferulate + UDP-alpha-D-glucuronate = (E)-4-O-(beta-D-glucuronosyl)-ferulate + UDP + H(+). The enzyme catalyses (E)-ferulate + UDP-alpha-D-glucuronate = (E)-ferulic acid beta-D-glucuronate ester + UDP. It carries out the reaction candesartan + UDP-alpha-D-glucuronate = candesartan O-beta-D-glucuronoside + UDP. The catalysed reaction is mycophenolate + UDP-alpha-D-glucuronate = mycophenolate 7-O-beta-D-glucuronide + UDP + H(+). In terms of biological role, UDP-glucuronosyltransferase (UGT) that catalyzes phase II biotransformation reactions in which lipophilic substrates are conjugated with glucuronic acid to increase the metabolite's water solubility, thereby facilitating excretion into either the urine or bile. Essential for the elimination and detoxification of drugs, xenobiotics and endogenous compounds. Catalyzes the glucuronidation of endogenous steroid hormones such as androgens and estrogens. Produces dihydrotestosterone (DHT) diglucuronide from the DHT after two subsequent glucoronidation steps. Involved in the glucuronidation of the phytochemical ferulic acid at the phenolic or the carboxylic acid group. Also catalyzes the glucuronidation of the isoflavones genistein, daidzein, glycitein, formononetin, biochanin A and prunetin, which are phytoestrogens with anticancer and cardiovascular properties. Involved in the glucuronidation of the AGTR1 angiotensin receptor antagonist caderastan, a drug which can inhibit the effect of angiotensin II. Also metabolizes mycophenolate, an immunosuppressive agent. The chain is UDP-glucuronosyltransferase 1A8 from Rattus norvegicus (Rat).